Reading from the N-terminus, the 273-residue chain is 2,3,4,5-tetrahydropyridine-2,6-dicarboxylate N-succinyltransferase (273 aa).

Substrate is bound by residues Arg106 and Asp143.

It belongs to the transferase hexapeptide repeat family. As to quaternary structure, homotrimer.

Its subcellular location is the cytoplasm. The catalysed reaction is (S)-2,3,4,5-tetrahydrodipicolinate + succinyl-CoA + H2O = (S)-2-succinylamino-6-oxoheptanedioate + CoA. It functions in the pathway amino-acid biosynthesis; L-lysine biosynthesis via DAP pathway; LL-2,6-diaminopimelate from (S)-tetrahydrodipicolinate (succinylase route): step 1/3. In Wolbachia sp. subsp. Brugia malayi (strain TRS), this protein is 2,3,4,5-tetrahydropyridine-2,6-dicarboxylate N-succinyltransferase.